The chain runs to 255 residues: Flagellar brake protein YcgR (255 aa).

The PilZ domain occupies 130 to 245; that stretch reads QRREHFRVPL…MAAHLQRFVM (116 aa).

The protein belongs to the YcgR family. Monomer. Interacts with the flagellar basal bodies.

The protein resides in the bacterial flagellum basal body. In terms of biological role, acts as a flagellar brake, regulating swimming and swarming in a bis-(3'-5') cyclic diguanylic acid (c-di-GMP)-dependent manner. Binds 1 c-di-GMP dimer per subunit. Increasing levels of c-di-GMP lead to decreased motility. The sequence is that of Flagellar brake protein YcgR from Thiobacillus denitrificans (strain ATCC 25259 / T1).